A 121-amino-acid polypeptide reads, in one-letter code: Large ribosomal subunit protein bL12 (121 aa).

This sequence belongs to the bacterial ribosomal protein bL12 family. Homodimer. Part of the ribosomal stalk of the 50S ribosomal subunit. Forms a multimeric L10(L12)X complex, where L10 forms an elongated spine to which 2 to 4 L12 dimers bind in a sequential fashion. Binds GTP-bound translation factors.

Functionally, forms part of the ribosomal stalk which helps the ribosome interact with GTP-bound translation factors. Is thus essential for accurate translation. The sequence is that of Large ribosomal subunit protein bL12 from Lactococcus lactis subsp. cremoris (strain MG1363).